Here is a 219-residue protein sequence, read N- to C-terminus: Ribose-5-phosphate isomerase A (219 aa).

Residues 28-31 (TGST), 81-84 (DGAD), and 94-97 (KGGG) contribute to the substrate site. The active-site Proton acceptor is Glu103. Lys121 contributes to the substrate binding site.

Belongs to the ribose 5-phosphate isomerase family. As to quaternary structure, homodimer.

The enzyme catalyses aldehydo-D-ribose 5-phosphate = D-ribulose 5-phosphate. The protein operates within carbohydrate degradation; pentose phosphate pathway; D-ribose 5-phosphate from D-ribulose 5-phosphate (non-oxidative stage): step 1/1. Catalyzes the reversible conversion of ribose-5-phosphate to ribulose 5-phosphate. The sequence is that of Ribose-5-phosphate isomerase A from Shewanella sp. (strain ANA-3).